The sequence spans 90 residues: Probable Fe(2+)-trafficking protein (90 aa).

This sequence belongs to the Fe(2+)-trafficking protein family.

Its function is as follows. Could be a mediator in iron transactions between iron acquisition and iron-requiring processes, such as synthesis and/or repair of Fe-S clusters in biosynthetic enzymes. The sequence is that of Probable Fe(2+)-trafficking protein from Vibrio parahaemolyticus serotype O3:K6 (strain RIMD 2210633).